A 278-amino-acid chain; its full sequence is MSTYFIGDIHGCFNELMHLLEKVSFDANSDVLWLTGDLINRGPKSLEVLRFVSSLGDNVKMVLGNHDVNLIALYASIKNSKKSSLMNNLLKSHDIDYLIYWLRKQPLFRVDHKKKIIMSHAGMYPYWDIQTASCYAKKIESMLCNHNYDTFLDFLYNNSDIKSKLYECTVFKNRELECLKLALNVFTRMRYCLPNGELDMTCKQSPSKNISSLLPWFFIKNSCLEDYCVFFGHWASLEKNITPKNIISLDTGCCWGGILSMFRLEDKKWFVQESEIKK.

It belongs to the Ap4A hydrolase family.

It catalyses the reaction P(1),P(4)-bis(5'-adenosyl) tetraphosphate + H2O = 2 ADP + 2 H(+). Its function is as follows. Hydrolyzes diadenosine 5',5'''-P1,P4-tetraphosphate to yield ADP. The chain is Bis(5'-nucleosyl)-tetraphosphatase, symmetrical from Buchnera aphidicola subsp. Baizongia pistaciae (strain Bp).